A 116-amino-acid chain; its full sequence is PTS system N,N'-diacetylchitobiose-specific EIIA component (116 aa).

The region spanning 15 to 113 is the PTS EIIA type-3 domain; the sequence is EELEEVVMGL…ITELIELHEK (99 aa). Catalysis depends on histidine 89, which acts as the Tele-phosphohistidine intermediate. Histidine 89 bears the Phosphohistidine; by HPr mark.

As to quaternary structure, forms a complex with ChbB (EIIB). ChbA is a homotrimer. Mg(2+) serves as cofactor.

The protein resides in the cytoplasm. The phosphoenolpyruvate-dependent sugar phosphotransferase system (sugar PTS), a major carbohydrate active transport system, catalyzes the phosphorylation of incoming sugar substrates concomitantly with their translocation across the cell membrane. The enzyme II ChbABC PTS system is involved in the transport of the chitin disaccharide N,N'-diacetylchitobiose (GlcNAc2). The protein is PTS system N,N'-diacetylchitobiose-specific EIIA component (chbA) of Escherichia coli O157:H7.